An 88-amino-acid chain; its full sequence is Histone H2A-beta, sperm (88 aa).

This sequence belongs to the histone H2A family. As to quaternary structure, the nucleosome is a histone octamer containing two molecules each of H2A, H2B, H3 and H4 assembled in one H3-H4 heterotetramer and two H2A-H2B heterodimers. The octamer wraps approximately 147 bp of DNA. In terms of processing, monoubiquitination in C-terminus gives a specific tag for epigenetic transcriptional repression.

Its subcellular location is the nucleus. The protein resides in the chromosome. Functionally, core component of nucleosome. Nucleosomes wrap and compact DNA into chromatin, limiting DNA accessibility to the cellular machineries which require DNA as a template. Histones thereby play a central role in transcription regulation, DNA repair, DNA replication and chromosomal stability. DNA accessibility is regulated via a complex set of post-translational modifications of histones, also called histone code, and nucleosome remodeling. This chain is Histone H2A-beta, sperm, found in Strongylocentrotus purpuratus (Purple sea urchin).